The sequence spans 441 residues: Keratin, type I cytoskeletal 15 (441 aa).

Residues 2–91 are head; that stretch reads LLLGHASTST…GGSDLLLGTS (90 aa). Residues 92-127 form a coil 1A region; the sequence is GKEAMQNLNDRLASYLDKVRSLEGKNHELELKIKDW. The IF rod domain occupies 92–407; sequence GKEAMQNLND…MLLDSEDSKG (316 aa). The segment at 128–149 is linker 1; that stretch reads YSQVIPGTGGPDARDYGHLEKE. Positions 150–241 are coil 1B; sequence IEDLQNKVNN…KNHEEDMKAA (92 aa). The linker 12 stretch occupies residues 242-261; sequence SSGIAGQVNVELDAAPGTNL. The coil 2 stretch occupies residues 262–403; that stretch reads LDELDACRRD…ATYRMLLDSE (142 aa). The tail stretch occupies residues 404–441; the sequence is DSKGSIINHKILTAIEKLVDGIVLSTEVLEKQIPVLSY.

This sequence belongs to the intermediate filament family. Heterotetramer of two type I and two type II keratins. As to expression, expressed in skin.

The chain is Keratin, type I cytoskeletal 15 (KRT15) from Protopterus aethiopicus (Marbled lungfish).